A 463-amino-acid polypeptide reads, in one-letter code: Glycogen synthase (463 aa).

Lys-15 contacts ADP-alpha-D-glucose.

This sequence belongs to the glycosyltransferase 1 family. Bacterial/plant glycogen synthase subfamily.

It catalyses the reaction [(1-&gt;4)-alpha-D-glucosyl](n) + ADP-alpha-D-glucose = [(1-&gt;4)-alpha-D-glucosyl](n+1) + ADP + H(+). It participates in glycan biosynthesis; glycogen biosynthesis. Its function is as follows. Synthesizes alpha-1,4-glucan chains using ADP-glucose. In Aquifex aeolicus (strain VF5), this protein is Glycogen synthase.